Here is a 668-residue protein sequence, read N- to C-terminus: Putative ankyrin repeat protein FPV244 (668 aa).

ANK repeat units follow at residues 40-69 (IPFT…KLIY), 144-173 (EYMK…DVNA), 177-206 (YCRT…DVNI), 210-239 (DDLS…NINK), 272-302 (YKNT…DVNA), 306-336 (KGET…DVNA), 340-370 (LYIT…NVNA), 374-403 (CDKT…DIEA), 407-437 (KIGT…NVNS), 441-471 (YLST…DVNA), 473-502 (NIRN…ELRD), and 571-602 (NMFY…EINT).

The polypeptide is Putative ankyrin repeat protein FPV244 (Vertebrata (FPV)).